A 208-amino-acid polypeptide reads, in one-letter code: MNFSIEQYSKFMTLLDMLLHNLQTLHMSLEDSIKWLGEVMAEIGPNHSQKSEDFHVFEVKEANAIIDYLKISLFQHYRLYEFLFYSTREEIVIGTEQTIEVVKPADYPFPAPLEEGISLDTYSTFIEPLPTPDMEQKVLDQEQGTQEALLESEMREEDPLGGFTIDDVKSALERVTDEVLISMQKEISEKLQVQEEAFNARIEKLKKA.

As to expression, testis-specific. Expressed in spermatocytes and round spermatids (at protein level).

The protein localises to the cytoplasm. It localises to the cytoskeleton. The protein resides in the microtubule organizing center. Its subcellular location is the centrosome. It is found in the cell projection. The protein localises to the cilium. It localises to the flagellum. In terms of biological role, calcium-binding protein. May be involved in the control of sperm flagellar movement. The sequence is that of Ciliary-associated calcium-binding coiled-coil protein 1 from Mus musculus (Mouse).